Consider the following 615-residue polypeptide: Protein PSK SIMULATOR 2 (615 aa).

Gly2 is lipidated: N-myristoyl glycine. The span at 16–27 shows a compositional bias: basic and acidic residues; the sequence is KKLRSNDDDKSR. 2 disordered regions span residues 16-59 and 506-529; these read KKLR…KSSK and AHGVKLQETNHVSPPNNRTISNTQ. A compositionally biased stretch (low complexity) spans 42 to 52; the sequence is SDSYYSDNYGG. Positions 512 to 529 are enriched in polar residues; that stretch reads QETNHVSPPNNRTISNTQ.

It is found in the nucleus. Functionally, promotes seedling growth probably via the regulation of phytosulfokine (PSK) signaling; PSK are peptide phytohormones acting as growth factors. Involved in PSK-induced root growth. Together with PSI1 and PSI3, required during vegetative growth and reproduction. The sequence is that of Protein PSK SIMULATOR 2 from Arabidopsis thaliana (Mouse-ear cress).